We begin with the raw amino-acid sequence, 328 residues long: Sterol-4-alpha-carboxylate 3-dehydrogenase, decarboxylating (328 aa).

Tyr-145 functions as the Proton acceptor in the catalytic mechanism. Lys-149 provides a ligand contact to NAD(+). The chain crosses the membrane as a helical span at residues 259–279 (LHMVLPTPIALSLVWIMALIW).

Belongs to the 3-beta-HSD family. Homodimer.

Its subcellular location is the endoplasmic reticulum membrane. It is found in the lipid droplet. It catalyses the reaction a 3beta-hydroxysteroid-4alpha-carboxylate + NADP(+) = a 3-oxosteroid + CO2 + NADPH. The catalysed reaction is a 3beta-hydroxysteroid-4alpha-carboxylate + NAD(+) = a 3-oxosteroid + CO2 + NADH. Its pathway is steroid biosynthesis; zymosterol biosynthesis; zymosterol from lanosterol: step 4/6. In terms of biological role, catalyzes the NAD(P)(+)-dependent oxidative decarboxylation of the C4 methyl groups of 4-alpha-carboxysterols in post-squalene cholesterol biosynthesis. In Dictyostelium discoideum (Social amoeba), this protein is Sterol-4-alpha-carboxylate 3-dehydrogenase, decarboxylating (nsdhl).